A 64-amino-acid polypeptide reads, in one-letter code: Large ribosomal subunit protein uL30 (64 aa).

The interval 1–22 (MAKAAKTIKVEQTRSAIRRQHS) is disordered.

Belongs to the universal ribosomal protein uL30 family. In terms of assembly, part of the 50S ribosomal subunit.

The polypeptide is Large ribosomal subunit protein uL30 (Nitrobacter hamburgensis (strain DSM 10229 / NCIMB 13809 / X14)).